The sequence spans 371 residues: Queuine tRNA-ribosyltransferase (371 aa).

The active-site Proton acceptor is the Asp90. Substrate-binding positions include 90-94, Asp144, Gln188, and Gly215; that span reads DSGGF. The tract at residues 246–252 is RNA binding; sequence GVGTPED. Asp265 acts as the Nucleophile in catalysis. Residues 270–274 are RNA binding; important for wobble base 34 recognition; sequence TRNAR. Zn(2+)-binding residues include Cys303, Cys305, Cys308, and His334.

The protein belongs to the queuine tRNA-ribosyltransferase family. As to quaternary structure, homodimer. Within each dimer, one monomer is responsible for RNA recognition and catalysis, while the other monomer binds to the replacement base PreQ1. Zn(2+) serves as cofactor.

The enzyme catalyses 7-aminomethyl-7-carbaguanine + guanosine(34) in tRNA = 7-aminomethyl-7-carbaguanosine(34) in tRNA + guanine. The protein operates within tRNA modification; tRNA-queuosine biosynthesis. Functionally, catalyzes the base-exchange of a guanine (G) residue with the queuine precursor 7-aminomethyl-7-deazaguanine (PreQ1) at position 34 (anticodon wobble position) in tRNAs with GU(N) anticodons (tRNA-Asp, -Asn, -His and -Tyr). Catalysis occurs through a double-displacement mechanism. The nucleophile active site attacks the C1' of nucleotide 34 to detach the guanine base from the RNA, forming a covalent enzyme-RNA intermediate. The proton acceptor active site deprotonates the incoming PreQ1, allowing a nucleophilic attack on the C1' of the ribose to form the product. After dissociation, two additional enzymatic reactions on the tRNA convert PreQ1 to queuine (Q), resulting in the hypermodified nucleoside queuosine (7-(((4,5-cis-dihydroxy-2-cyclopenten-1-yl)amino)methyl)-7-deazaguanosine). This chain is Queuine tRNA-ribosyltransferase, found in Neisseria meningitidis serogroup C (strain 053442).